Here is a 106-residue protein sequence, read N- to C-terminus: Putative double-stranded DNA mimic protein VV1228 (106 aa).

Belongs to the putative dsDNA mimic protein family.

May act as a double-stranded DNA (dsDNA) mimic. Probably regulates the activity of a dsDNA-binding protein. This Vibrio vulnificus (strain YJ016) protein is Putative double-stranded DNA mimic protein VV1228.